A 478-amino-acid polypeptide reads, in one-letter code: UDP-N-acetylmuramate--L-alanine ligase (478 aa).

112 to 118 (GTHGKTT) lines the ATP pocket.

Belongs to the MurCDEF family.

It is found in the cytoplasm. It carries out the reaction UDP-N-acetyl-alpha-D-muramate + L-alanine + ATP = UDP-N-acetyl-alpha-D-muramoyl-L-alanine + ADP + phosphate + H(+). The protein operates within cell wall biogenesis; peptidoglycan biosynthesis. Functionally, cell wall formation. The sequence is that of UDP-N-acetylmuramate--L-alanine ligase from Polynucleobacter asymbioticus (strain DSM 18221 / CIP 109841 / QLW-P1DMWA-1) (Polynucleobacter necessarius subsp. asymbioticus).